The primary structure comprises 136 residues: Large ribosomal subunit protein bL20 (136 aa).

This sequence belongs to the bacterial ribosomal protein bL20 family.

Functionally, binds directly to 23S ribosomal RNA and is necessary for the in vitro assembly process of the 50S ribosomal subunit. It is not involved in the protein synthesizing functions of that subunit. In Tropheryma whipplei (strain Twist) (Whipple's bacillus), this protein is Large ribosomal subunit protein bL20.